The sequence spans 360 residues: Peptide chain release factor 1 (360 aa).

The residue at position 235 (Q235) is an N5-methylglutamine. A disordered region spans residues 286–313; that stretch reads RQQAEASTRRNLLGSGDRSDRNRTYNFP.

The protein belongs to the prokaryotic/mitochondrial release factor family. Methylated by PrmC. Methylation increases the termination efficiency of RF1.

It is found in the cytoplasm. In terms of biological role, peptide chain release factor 1 directs the termination of translation in response to the peptide chain termination codons UAG and UAA. The sequence is that of Peptide chain release factor 1 from Cronobacter sakazakii (strain ATCC BAA-894) (Enterobacter sakazakii).